The chain runs to 229 residues: Putative N-acetylmannosamine-6-phosphate 2-epimerase (229 aa).

This sequence belongs to the NanE family.

The catalysed reaction is an N-acyl-D-glucosamine 6-phosphate = an N-acyl-D-mannosamine 6-phosphate. The protein operates within amino-sugar metabolism; N-acetylneuraminate degradation; D-fructose 6-phosphate from N-acetylneuraminate: step 3/5. Converts N-acetylmannosamine-6-phosphate (ManNAc-6-P) to N-acetylglucosamine-6-phosphate (GlcNAc-6-P). The protein is Putative N-acetylmannosamine-6-phosphate 2-epimerase of Escherichia coli O7:K1 (strain IAI39 / ExPEC).